The chain runs to 954 residues: MTTPTEFHFTDYQPYDFANRRHIGPSPSEMAEMLKVVGYKSLDALIDATVPSSIRQKVPLTWGAALTEREALDRLRETANKNQVLTSLIGQGYYGTITPPVIQRNILENPAWYTAYTPYQPEISQGRLEALLNYQTMVCDLTGLDVANASLLDEATAAAEAMAMCQRVAKSKATAFFVDANCHPQTIALIETRAAPLGWKVIIGNPFTDLDPVDVFGAIFQYPGTHGHVSDFTGLISRLHQTGAIAAVAADLLALTLLKSPGEMGADIAIGTSQRFGVPVGYGGPHAAYMSVKDAHKRSMPGRLVGVSVDARGNRAYRLSLQTREQHIRREKATSNICTAQVLLAVMASMYGVFHGPQGIKAIAQQTHQKAVLMAKGLEKLGYTIEPETFFDTITVEVGHMQGVILRSAVAEGVNLRKVGATKIGMSLDERTRPATLEAVWRAFGGNFSISDFEPDYRLPKDLLRTSQYMTHPIFHMNRAESEMTRYIRRLSDRDLALDRSMIPLGSCTMKLNATAEMLPITWPEFSDIHPFVPANQALGYKEMIDDLSEKLCSVTGYDAFSMQPNSGAQGEYAGLLTIRNYHLANGGTHRDVCLIPTSAHGTNPASAQMVGMKVVPVKVRDNGDIDIDDFRLKAEQYAENLSCCMITYPSTHGVFEETVREICEITHKHGGQVYLDGANMNAMVGLARPGDIGSDVSHLNLHKTFCIPHGGGGPGMGPIGVKAHLAPFLPGHPTTDGREGAVSAAPFGSPSILPISWSYCLMMGGEGLTQATKVAILNANYIAERLKGAYDVLYKSETGRVAHECIIDTRPLADSCGVTVDDVAKRLIDCGFHAPTMSWPVAGTLMIEPTESETKAEIDRFCDAMLAIREEARDIEEGRADKNNNPLKNAPHTVEDLVGEWDRPYSREKGCFPPGAFRIDKYWSPVNRIDNVYGDRNLICTCPPMEAYAEAAE.

Residue K704 is modified to N6-(pyridoxal phosphate)lysine.

This sequence belongs to the GcvP family. In terms of assembly, the glycine cleavage system is composed of four proteins: P, T, L and H. The cofactor is pyridoxal 5'-phosphate.

The catalysed reaction is N(6)-[(R)-lipoyl]-L-lysyl-[glycine-cleavage complex H protein] + glycine + H(+) = N(6)-[(R)-S(8)-aminomethyldihydrolipoyl]-L-lysyl-[glycine-cleavage complex H protein] + CO2. In terms of biological role, the glycine cleavage system catalyzes the degradation of glycine. The P protein binds the alpha-amino group of glycine through its pyridoxal phosphate cofactor; CO(2) is released and the remaining methylamine moiety is then transferred to the lipoamide cofactor of the H protein. This chain is Glycine dehydrogenase (decarboxylating), found in Agrobacterium fabrum (strain C58 / ATCC 33970) (Agrobacterium tumefaciens (strain C58)).